A 470-amino-acid polypeptide reads, in one-letter code: Desmin (470 aa).

Residues 2-108 (SQAYSSSQRV…QEFLTTRTNE (107 aa)) form a head region. The residue at position 7 (Ser7) is a Phosphoserine; by CDK1. Position 12 is a phosphoserine; by AURKB (Ser12). Arg16 carries the omega-N-methylarginine modification. Thr17 carries the phosphothreonine; by AURKB and ROCK1 modification. Ser28 is subject to Phosphoserine; by CDK1. Phosphoserine is present on Ser31. A Phosphoserine; by CDK1 modification is found at Ser32. Asymmetric dimethylarginine; alternate is present on Arg37. Omega-N-methylarginine; alternate is present on Arg37. Position 45 is a phosphoserine (Ser45). An ADP-ribosylarginine modification is found at Arg58. Residue Ser60 is modified to Phosphoserine; by AURKB. Ser68 is subject to Phosphoserine. Arg70 carries the post-translational modification Omega-N-methylarginine. Phosphothreonine; by ROCK1 occurs at positions 76 and 77. Phosphoserine is present on Ser81. The 309-residue stretch at 108-416 (EKVELQELND…KLLEGEESRI (309 aa)) folds into the IF rod domain. A coil 1A region spans residues 109 to 141 (KVELQELNDRFANYIEKVRFLEQQNAALAAEVN). Residues 142–151 (RLKGREPTRV) are linker 1. Positions 152 to 252 (AELYEEELRE…HEEEIRELQA (101 aa)) are coil 1B. The segment at 253 to 268 (QLQEQQVQVEMDMSKP) is linker 12. Residues 268–415 (PDLTAALRDI…RKLLEGEESR (148 aa)) are interaction with NEB. The tract at residues 269 to 287 (DLTAALRDIRAQYETIAAK) is coil 2A. The linker 2 stretch occupies residues 288-295 (NISEAEEW). Ser290, Ser358, Ser361, and Ser424 each carry phosphoserine. The tract at residues 296–412 (YKSKVSDLTQ…ATYRKLLEGE (117 aa)) is coil 2B. The segment at 413–470 (ESRINLPIQTYSALNFRETSPEQRGSEVHTKKTVMIKTIETRDGEVVSEATQQQHEVL) is tail. Residues 438-453 (SEVHTKKTVMIKTIET) are interaction with CRYAB.

Belongs to the intermediate filament family. As to quaternary structure, homomer. Interacts with DST. Interacts with MTM1. Interacts with EPPK1; interaction is dependent of higher-order structure of intermediate filament. Interacts with CRYAB. Interacts with NEB (via nebulin repeats 160-164). Interacts (via rod region) with NEBL (via nebulin repeats 1-5). Interacts with ASB2 isoform 1; the interaction targets DES for proteasomal degradation. Interacts with PLEC isoform 1C. Interacts with PKP1. Interacts with FLII. ADP-ribosylation prevents ability to form intermediate filaments. In terms of processing, phosphorylation at Ser-7, Ser-28 and Ser-32 by CDK1, phosphorylation at Ser-60 by AURKB and phosphorylation at Thr-76 by ROCK1 contribute to efficient separation of desmin intermediate filaments during mitosis. Post-translationally, ubiquitination by a SCF-like complex containing ASB2 isoform 1 leads to proteasomal degradation.

Its subcellular location is the cytoplasm. It localises to the myofibril. It is found in the sarcomere. The protein localises to the z line. The protein resides in the cell membrane. Its subcellular location is the sarcolemma. It localises to the nucleus. It is found in the cell tip. The protein localises to the nucleus envelope. Functionally, muscle-specific type III intermediate filament essential for proper muscular structure and function. Plays a crucial role in maintaining the structure of sarcomeres, inter-connecting the Z-disks and forming the myofibrils, linking them not only to the sarcolemmal cytoskeleton, but also to the nucleus and mitochondria, thus providing strength for the muscle fiber during activity. In adult striated muscle they form a fibrous network connecting myofibrils to each other and to the plasma membrane from the periphery of the Z-line structures. May act as a sarcomeric microtubule-anchoring protein: specifically associates with detyrosinated tubulin-alpha chains, leading to buckled microtubules and mechanical resistance to contraction. Required for nuclear membrane integrity, via anchoring at the cell tip and nuclear envelope, resulting in maintenance of microtubule-derived intracellular mechanical forces. Contributes to the transcriptional regulation of the NKX2-5 gene in cardiac progenitor cells during a short period of cardiomyogenesis and in cardiac side population stem cells in the adult. Plays a role in maintaining an optimal conformation of nebulette (NEB) on heart muscle sarcomeres to bind and recruit cardiac alpha-actin. In Homo sapiens (Human), this protein is Desmin (DES).